A 44-amino-acid polypeptide reads, in one-letter code: Large ribosomal subunit protein bL34 (44 aa).

Composition is skewed to basic residues over residues 1–22 (MKRT…RARM) and 31–44 (IRAR…RLSV). The disordered stretch occupies residues 1–44 (MKRTLGGTSRKRKRTSGFRARMRTPDGRNVIRARRKKGRHRLSV).

The protein belongs to the bacterial ribosomal protein bL34 family.

The sequence is that of Large ribosomal subunit protein bL34 from Nostoc punctiforme (strain ATCC 29133 / PCC 73102).